Reading from the N-terminus, the 106-residue chain is MTYIIYAFAAVFEIAGCFAFWAWLKLEKPAWWLAPGMISLALFAWLLTLVPSDAAGRTFAAYGGIYILASLSWLWLIEGRVPDRYDIGGGLICLAGASVILFAPRA.

Helical transmembrane passes span 4-24, 30-50, 59-79, and 86-106; these read IIYA…WAWL, AWWL…LTLV, FAAY…LIEG, and DIGG…APRA.

This sequence belongs to the UPF0060 family.

The protein resides in the cell inner membrane. The polypeptide is UPF0060 membrane protein RHE_CH01408 (Rhizobium etli (strain ATCC 51251 / DSM 11541 / JCM 21823 / NBRC 15573 / CFN 42)).